The chain runs to 176 residues: Ribosome maturation factor RimM (176 aa).

The PRC barrel domain occupies 99–173; that stretch reads ADEYYWHDLL…TMTITPLEGL (75 aa).

The protein belongs to the RimM family. As to quaternary structure, binds ribosomal protein uS19.

The protein localises to the cytoplasm. In terms of biological role, an accessory protein needed during the final step in the assembly of 30S ribosomal subunit, possibly for assembly of the head region. Essential for efficient processing of 16S rRNA. May be needed both before and after RbfA during the maturation of 16S rRNA. It has affinity for free ribosomal 30S subunits but not for 70S ribosomes. The chain is Ribosome maturation factor RimM from Trichlorobacter lovleyi (strain ATCC BAA-1151 / DSM 17278 / SZ) (Geobacter lovleyi).